The chain runs to 374 residues: Methylthioribose-1-phosphate isomerase (374 aa).

S2 bears the N-acetylserine mark. Catalysis depends on D253, which acts as the Proton donor.

This sequence belongs to the eIF-2B alpha/beta/delta subunits family. MtnA subfamily.

The protein localises to the cytoplasm. The protein resides in the nucleus. It carries out the reaction 5-(methylsulfanyl)-alpha-D-ribose 1-phosphate = 5-(methylsulfanyl)-D-ribulose 1-phosphate. It participates in amino-acid biosynthesis; L-methionine biosynthesis via salvage pathway; L-methionine from S-methyl-5-thio-alpha-D-ribose 1-phosphate: step 1/6. Functionally, catalyzes the interconversion of methylthioribose-1-phosphate (MTR-1-P) into methylthioribulose-1-phosphate (MTRu-1-P). This chain is Methylthioribose-1-phosphate isomerase, found in Arabidopsis thaliana (Mouse-ear cress).